Reading from the N-terminus, the 720-residue chain is 1,4-alpha-glucan branching enzyme GlgB 2 (720 aa).

The Nucleophile role is filled by Asp-398. Glu-451 acts as the Proton donor in catalysis.

It belongs to the glycosyl hydrolase 13 family. GlgB subfamily. As to quaternary structure, monomer.

The catalysed reaction is Transfers a segment of a (1-&gt;4)-alpha-D-glucan chain to a primary hydroxy group in a similar glucan chain.. It participates in glycan biosynthesis; glycogen biosynthesis. Its function is as follows. Catalyzes the formation of the alpha-1,6-glucosidic linkages in glycogen by scission of a 1,4-alpha-linked oligosaccharide from growing alpha-1,4-glucan chains and the subsequent attachment of the oligosaccharide to the alpha-1,6 position. In Xanthomonas oryzae pv. oryzae (strain KACC10331 / KXO85), this protein is 1,4-alpha-glucan branching enzyme GlgB 2.